A 192-amino-acid polypeptide reads, in one-letter code: Fe/S biogenesis protein NfuA (192 aa).

Positions 149 and 152 each coordinate [4Fe-4S] cluster.

It belongs to the NfuA family. As to quaternary structure, homodimer. The cofactor is [4Fe-4S] cluster.

Involved in iron-sulfur cluster biogenesis. Binds a 4Fe-4S cluster, can transfer this cluster to apoproteins, and thereby intervenes in the maturation of Fe/S proteins. Could also act as a scaffold/chaperone for damaged Fe/S proteins. In Shewanella amazonensis (strain ATCC BAA-1098 / SB2B), this protein is Fe/S biogenesis protein NfuA.